The following is a 129-amino-acid chain: Large ribosomal subunit protein bL19 (129 aa).

This sequence belongs to the bacterial ribosomal protein bL19 family.

In terms of biological role, this protein is located at the 30S-50S ribosomal subunit interface and may play a role in the structure and function of the aminoacyl-tRNA binding site. This is Large ribosomal subunit protein bL19 from Rhizorhabdus wittichii (strain DSM 6014 / CCUG 31198 / JCM 15750 / NBRC 105917 / EY 4224 / RW1) (Sphingomonas wittichii).